Here is a 501-residue protein sequence, read N- to C-terminus: Dynein regulatory complex subunit 5 (501 aa).

Residues Met1–Lys23 show a composition bias toward polar residues. Disordered regions lie at residues Met1–Ala56 and Pro203–Glu222. The span at Ser24 to Gly34 shows a compositional bias: low complexity. Residues Pro35–Ser49 are compositionally biased toward polar residues. LRR repeat units lie at residues Val308–Asp321, Arg335–Ala355, Asn363–Ala383, Cys391–Ser411, and Thr419–Leu439.

The protein belongs to the DRC5 family. In terms of assembly, component of the nexin-dynein regulatory complex (N-DRC). Interacts with DRC1. Interacts with FBXL13/DRC6, DRC3 and DRC7.

Its subcellular location is the cell projection. The protein resides in the cilium. It is found in the flagellum. The protein localises to the cytoplasm. It localises to the cytoskeleton. Its subcellular location is the flagellum axoneme. Functionally, component of the nexin-dynein regulatory complex (N-DRC) a key regulator of ciliary/flagellar motility which maintains the alignment and integrity of the distal axoneme and regulates microtubule sliding in motile axonemes. May play a role in the assembly of N-DRC. May be required for sperm motility. This chain is Dynein regulatory complex subunit 5 (TCTE1), found in Macaca fascicularis (Crab-eating macaque).